A 271-amino-acid polypeptide reads, in one-letter code: Formamidopyrimidine-DNA glycosylase (271 aa).

Catalysis depends on Pro2, which acts as the Schiff-base intermediate with DNA. The Proton donor role is filled by Glu3. Lys57 (proton donor; for beta-elimination activity) is an active-site residue. DNA is bound by residues His90, Arg109, and Lys151. An FPG-type zinc finger spans residues 236-270 (HVYGRGGESCTQCGNLLSEIKLGQRATVFCGLCQT). Residue Arg260 is the Proton donor; for delta-elimination activity of the active site.

This sequence belongs to the FPG family. In terms of assembly, monomer. Zn(2+) is required as a cofactor.

The catalysed reaction is Hydrolysis of DNA containing ring-opened 7-methylguanine residues, releasing 2,6-diamino-4-hydroxy-5-(N-methyl)formamidopyrimidine.. It carries out the reaction 2'-deoxyribonucleotide-(2'-deoxyribose 5'-phosphate)-2'-deoxyribonucleotide-DNA = a 3'-end 2'-deoxyribonucleotide-(2,3-dehydro-2,3-deoxyribose 5'-phosphate)-DNA + a 5'-end 5'-phospho-2'-deoxyribonucleoside-DNA + H(+). Functionally, involved in base excision repair of DNA damaged by oxidation or by mutagenic agents. Acts as a DNA glycosylase that recognizes and removes damaged bases. Has a preference for oxidized purines, such as 7,8-dihydro-8-oxoguanine (8-oxoG). Has AP (apurinic/apyrimidinic) lyase activity and introduces nicks in the DNA strand. Cleaves the DNA backbone by beta-delta elimination to generate a single-strand break at the site of the removed base with both 3'- and 5'-phosphates. The sequence is that of Formamidopyrimidine-DNA glycosylase from Shewanella woodyi (strain ATCC 51908 / MS32).